The primary structure comprises 242 residues: Mannose-P-dolichol utilization defect 1 protein homolog (242 aa).

The 59-residue stretch at 37 to 95 (LSRGLGFAITLGSILLFVPQILKIQAARSAQGISAASQLLALVGAIGTASYSYRSGFVF) folds into the PQ-loop 1 domain. The next 7 helical transmembrane spans lie at 40–60 (GLGF…ILKI), 68–88 (GISA…ASYS), 98–118 (WGDS…IFLF), 120–140 (GQTM…YGVV), 148–168 (TLTA…LLQI), 180–200 (LSLI…FTSV), and 207–227 (LLIV…AQFF). The PQ-loop 2 domain occupies 152–202 (VQTAGIPIVVVSKLLQISQNYRAQSTGQLSLISVFLQFAGTLARVFTSVQD).

The protein belongs to the MPDU1 (TC 2.A.43.3) family.

It localises to the membrane. This chain is Mannose-P-dolichol utilization defect 1 protein homolog, found in Caenorhabditis elegans.